The chain runs to 106 residues: Testis-specific basic protein Y 2 (106 aa).

The protein belongs to the VCX/VCY family. In terms of assembly, interacts with MAP1S. Interacts with UBE3A (via HECT domain). As to expression, expressed exclusively in testis. Expressed in ejaculated spermatozoa of germ cell. Expressed in the nuclei of spermatogonia, spermatocytes, and round spermatids, except elongated spermatids (at protein level).

In Homo sapiens (Human), this protein is Testis-specific basic protein Y 2 (BPY2).